A 148-amino-acid polypeptide reads, in one-letter code: Urease accessory protein UreE (148 aa).

Belongs to the UreE family.

It localises to the cytoplasm. Its function is as follows. Involved in urease metallocenter assembly. Binds nickel. Probably functions as a nickel donor during metallocenter assembly. The chain is Urease accessory protein UreE from Halalkalibacterium halodurans (strain ATCC BAA-125 / DSM 18197 / FERM 7344 / JCM 9153 / C-125) (Bacillus halodurans).